Here is a 486-residue protein sequence, read N- to C-terminus: Cardiolipin synthase A (486 aa).

2 helical membrane-spanning segments follow: residues 3-23 and 38-58; these read TFYT…IAGV and MAWL…YLSF. PLD phosphodiesterase domains lie at 219 to 246 and 399 to 426; these read MDLR…VDPR and EGGL…DMRS. Active-site residues include His224, Lys226, Asp231, His404, Lys406, and Asp411.

The protein belongs to the phospholipase D family. Cardiolipin synthase subfamily. ClsA sub-subfamily.

Its subcellular location is the cell inner membrane. It carries out the reaction 2 a 1,2-diacyl-sn-glycero-3-phospho-(1'-sn-glycerol) = a cardiolipin + glycerol. Catalyzes the reversible phosphatidyl group transfer from one phosphatidylglycerol molecule to another to form cardiolipin (CL) (diphosphatidylglycerol) and glycerol. In Yersinia pseudotuberculosis serotype O:3 (strain YPIII), this protein is Cardiolipin synthase A.